A 744-amino-acid polypeptide reads, in one-letter code: Spalt-like protein sem-4 (744 aa).

The disordered stretch occupies residues 6–32 (AEMAAVSSRRKQSKPRRMSGEGDAMMS). A compositionally biased stretch (basic residues) spans 13–22 (SRRKQSKPRR). 4 C2H2-type zinc fingers span residues 99-124 (SSCPIQSCSQSFSSPAALTWHVLDAH), 305-327 (NQCILCRRVLSCKSALQMHYRTH), 333-355 (FKCKICQRAFTTKGNLKTHMGVH), and 411-433 (QQCPICQQRFLNAGELAVHITEH). Over residues 487 to 497 (KNDSSPNTDTS) the composition is skewed to polar residues. Disordered regions lie at residues 487-530 (KNDS…RQDI) and 542-562 (KLEEPPILEQQVSTTPNPKNE). Over residues 499 to 509 (VEEKITRDDPP) the composition is skewed to basic and acidic residues. The span at 513–525 (SLSPSNSSDSSSS) shows a compositional bias: low complexity. The segment covering 551–561 (QQVSTTPNPKN) has biased composition (polar residues). 3 consecutive C2H2-type zinc fingers follow at residues 589–611 (HQCGVCFKHFSSSSALQIHMRTH), 617–639 (FKCDMCGRAFTTRGNLKVHMGTH), and 701–723 (TVCSVCQKVCQSPNELEQHLKEH). The tract at residues 725-744 (NNGSSAAPTPLASAATPPPS) is disordered. Residues 728–744 (SSAAPTPLASAATPPPS) show a composition bias toward low complexity.

It belongs to the sal C2H2-type zinc-finger protein family.

Its subcellular location is the nucleus. Functionally, transcription factor, involved in positive and negative modulation of transcription. Binds to multiple DNA sequence motifs in the regulatory elements of target genes, including homeobox selector egl-5 and LIM homeobox mec-3. Involved in cell-fate regulation in multiple lineages, including neuronal, mesodermal and vulval. Required to regulate the fate of PLM touch receptor neurons, acting via negative modulation of transcription of egl-5 and mec-3. May modulate gene expression by interacting with different transcription factors during neuronal and mesodermal cell development. Promotes the proliferative sex myoblast (SM) fate, in a cell autonomous manner, acting via the SoxC transcription factor sem-2. Involved in vulval cell-fate determination, acting by regulating expression of homeobox protein lin-39, and may link lin-39 to incoming signaling pathways. Plays a role in detoxification of reactive oxygen species (ROS), by regulating expression of transcription factor skn-1 and the phase II detoxification genes. The chain is Spalt-like protein sem-4 from Caenorhabditis elegans.